The chain runs to 811 residues: Elongation factor G, mitochondrial (811 aa).

The N-terminal 64 residues, 1 to 64 (MSAIARAAAR…FQQSFQRRWA (64 aa)), are a transit peptide targeting the mitochondrion. Residues 96 to 394 (RRQRNVGISA…GVCAYLPNPS (299 aa)) form the tr-type G domain. GTP contacts are provided by residues 105-112 (AHIDSGKT), 192-196 (DTPGH), and 246-249 (NKMD).

It belongs to the TRAFAC class translation factor GTPase superfamily. Classic translation factor GTPase family. EF-G/EF-2 subfamily.

It is found in the mitochondrion. It functions in the pathway protein biosynthesis; polypeptide chain elongation. Functionally, mitochondrial GTPase that catalyzes the GTP-dependent ribosomal translocation step during translation elongation. During this step, the ribosome changes from the pre-translocational (PRE) to the post-translocational (POST) state as the newly formed A-site-bound peptidyl-tRNA and P-site-bound deacylated tRNA move to the P and E sites, respectively. Catalyzes the coordinated movement of the two tRNA molecules, the mRNA and conformational changes in the ribosome. The polypeptide is Elongation factor G, mitochondrial (Cryptococcus neoformans var. neoformans serotype D (strain JEC21 / ATCC MYA-565) (Filobasidiella neoformans)).